The primary structure comprises 362 residues: Phospho-N-acetylmuramoyl-pentapeptide-transferase (362 aa).

The next 10 membrane-spanning stretches (helical) occupy residues 27-47 (VMAA…VIRW), 73-93 (TMGG…WGDL), 97-117 (YVWV…VDDW), 132-152 (WKYL…GLTA), 160-180 (LIVP…FVAL), 200-220 (GLAI…AYVA), 237-257 (AGEL…FLWF), 264-284 (VFMG…VAVV), 289-309 (IVLF…MVQV), and 339-359 (QVVV…LSTL).

This sequence belongs to the glycosyltransferase 4 family. MraY subfamily. Mg(2+) is required as a cofactor.

The protein localises to the cell inner membrane. It carries out the reaction UDP-N-acetyl-alpha-D-muramoyl-L-alanyl-gamma-D-glutamyl-meso-2,6-diaminopimeloyl-D-alanyl-D-alanine + di-trans,octa-cis-undecaprenyl phosphate = di-trans,octa-cis-undecaprenyl diphospho-N-acetyl-alpha-D-muramoyl-L-alanyl-D-glutamyl-meso-2,6-diaminopimeloyl-D-alanyl-D-alanine + UMP. Its pathway is cell wall biogenesis; peptidoglycan biosynthesis. Catalyzes the initial step of the lipid cycle reactions in the biosynthesis of the cell wall peptidoglycan: transfers peptidoglycan precursor phospho-MurNAc-pentapeptide from UDP-MurNAc-pentapeptide onto the lipid carrier undecaprenyl phosphate, yielding undecaprenyl-pyrophosphoryl-MurNAc-pentapeptide, known as lipid I. The chain is Phospho-N-acetylmuramoyl-pentapeptide-transferase from Aromatoleum aromaticum (strain DSM 19018 / LMG 30748 / EbN1) (Azoarcus sp. (strain EbN1)).